A 391-amino-acid polypeptide reads, in one-letter code: MEEYTDSGEDKNVYSDDDNDYFTASTQNNRTSKNTDSSPLDPKRLAEEMSKIQPKHEKEKKKLFESYYKTRENEENGADNHCFKFNKIYTDLKFDYSVLVSGFGSKIQLIETFVKEFCTDGPSLHFKGYLPNLSVRDLLYKITFSLFGIDKKIASPIAHCNFIKSIFESGSMDINKMRQTFGGRFDYGIPDHVYVVIHNIDGYSLRNETSQLTLALLATIPQVHMIATIDAIGAQLLWDNRMLSNFNWTTYSMPTYQPYDLELSYDTNTKGGGGGGGIGSKSSSGTNKNLQPSTILTVLKSLTEISTDIFKELLTYLIKKKKNKMEFKILFDICRDAFLVSSESGLKTQLREFIDHKIIIQKEIGDTTFLIIPIETSVMEIILSQLENSIS.

The tract at residues 1-43 (MEEYTDSGEDKNVYSDDDNDYFTASTQNNRTSKNTDSSPLDPK) is disordered. A compositionally biased stretch (polar residues) spans 22–38 (FTASTQNNRTSKNTDSS).

It belongs to the ORC2 family. In terms of assembly, ORC is composed of six subunits.

It is found in the nucleus. In terms of biological role, component of the origin recognition complex (ORC) that binds origins of replication. DNA-binding is ATP-dependent, however specific DNA sequences that define origins of replication have not been identified so far. ORC is required to assemble the pre-replication complex necessary to initiate DNA replication. The protein is Origin recognition complex subunit 2 (orcB) of Dictyostelium discoideum (Social amoeba).